Here is a 319-residue protein sequence, read N- to C-terminus: Acetyl esterase (319 aa).

Residues 91-93 (HGG) carry the Involved in the stabilization of the negatively charged intermediate by the formation of the oxyanion hole motif. Catalysis depends on residues Ser165, Asp262, and His292.

This sequence belongs to the 'GDXG' lipolytic enzyme family. As to quaternary structure, homodimer. Interacts with MalT and MelA.

It is found in the cytoplasm. Functionally, displays esterase activity towards short chain fatty esters (acyl chain length of up to 8 carbons). Able to hydrolyze triacetylglycerol (triacetin) and tributyrylglycerol (tributyrin), but not trioleylglycerol (triolein) or cholesterol oleate. Negatively regulates MalT activity by antagonizing maltotriose binding. Inhibits MelA galactosidase activity. In Escherichia coli O127:H6 (strain E2348/69 / EPEC), this protein is Acetyl esterase.